The chain runs to 216 residues: Uracil phosphoribosyltransferase (216 aa).

5-phospho-alpha-D-ribose 1-diphosphate-binding positions include Arg85, Arg110, and 135 to 143 (DPMVATGYS). Uracil is bound by residues Ile200 and 205–207 (GDA). Asp206 contributes to the 5-phospho-alpha-D-ribose 1-diphosphate binding site.

This sequence belongs to the UPRTase family. The cofactor is Mg(2+).

The catalysed reaction is UMP + diphosphate = 5-phospho-alpha-D-ribose 1-diphosphate + uracil. It participates in pyrimidine metabolism; UMP biosynthesis via salvage pathway; UMP from uracil: step 1/1. Allosterically activated by GTP. In terms of biological role, catalyzes the conversion of uracil and 5-phospho-alpha-D-ribose 1-diphosphate (PRPP) to UMP and diphosphate. The chain is Uracil phosphoribosyltransferase from Burkholderia lata (strain ATCC 17760 / DSM 23089 / LMG 22485 / NCIMB 9086 / R18194 / 383).